Consider the following 547-residue polypeptide: Chaperonin GroEL (547 aa).

ATP-binding positions include 30-33 (TLGP), Lys51, 87-91 (DGTTT), Gly415, 479-481 (NAA), and Asp495.

Belongs to the chaperonin (HSP60) family. As to quaternary structure, forms a cylinder of 14 subunits composed of two heptameric rings stacked back-to-back. Interacts with the co-chaperonin GroES.

It is found in the cytoplasm. It catalyses the reaction ATP + H2O + a folded polypeptide = ADP + phosphate + an unfolded polypeptide.. Together with its co-chaperonin GroES, plays an essential role in assisting protein folding. The GroEL-GroES system forms a nano-cage that allows encapsulation of the non-native substrate proteins and provides a physical environment optimized to promote and accelerate protein folding. In Nitratidesulfovibrio vulgaris (strain ATCC 29579 / DSM 644 / CCUG 34227 / NCIMB 8303 / VKM B-1760 / Hildenborough) (Desulfovibrio vulgaris), this protein is Chaperonin GroEL.